Here is a 121-residue protein sequence, read N- to C-terminus: Large ribosomal subunit protein uL14c (121 aa).

This sequence belongs to the universal ribosomal protein uL14 family. As to quaternary structure, part of the 50S ribosomal subunit.

It is found in the plastid. The protein resides in the chloroplast. In terms of biological role, binds to 23S rRNA. The chain is Large ribosomal subunit protein uL14c from Phaeodactylum tricornutum (strain CCAP 1055/1).